We begin with the raw amino-acid sequence, 1045 residues long: Tyrosine-protein kinase-like otk (1045 aa).

A signal peptide spans 1 to 25 (MPIVMDMNMLLMLSLAFTVMAPASA). Ig-like C2-type domains are found at residues 26-116 (SSSR…AKLS), 115-200 (LSVI…RVMS), 260-373 (PEGL…APVN), 376-469 (PGAL…VAIN), and 474-564 (PRFS…VRLL). Over 26 to 587 (SSSRFTQPPQ…AGDGFLVTRA (562 aa)) the chain is Extracellular. 4 cysteine pairs are disulfide-bonded: C49-C97, C139-C189, C285-C362, and C406-C453. Residues N344, N424, N435, N442, N450, N463, N518, and N530 are each glycosylated (N-linked (GlcNAc...) asparagine). An intrachain disulfide couples C496 to C548. A helical membrane pass occupies residues 588-608 (VLITMTVALAYIVLVVGLMLW). The Cytoplasmic portion of the chain corresponds to 609–1045 (CRYRRQARKA…LSKAMQAAEK (437 aa)). The tract at residues 628–676 (AGGDQAESGKNTEQEPCLSKQRNGHGKSRTAANGDAQKSDDTACSQQSK) is disordered. The residue at position 681 (S681) is a Phosphoserine. The Protein kinase; inactive domain maps to 695 to 1040 (LSELIQIGRG…QLGAALSKAM (346 aa)). Positions 722-790 (ASPSDKDADT…QPQEQAQSES (69 aa)) are disordered. Residues 725 to 736 (SDKDADTEKQHS) are compositionally biased toward basic and acidic residues. A compositionally biased stretch (gly residues) spans 743–752 (GASGASGCGS). Acidic residues predominate over residues 771-782 (DDIEEIKEEEQP).

The protein belongs to the protein kinase superfamily. Tyr protein kinase family. Insulin receptor subfamily. Interacts with plexA; component of a receptor complex that mediates the repulsive signaling in response to Semaphorin ligands.

The protein localises to the cell membrane. Functionally, acts as a calcium-dependent, homophilic cell adhesion molecule that regulates neural recognition during the development of the nervous system. Component of the repulsive Plexin signaling response to regulate motor axon guidance at the embryonic stage. Also component of a receptor complex that is required in the adult visual system to innervate the lamina layer; specific targeting of R1-R6 axons. This is Tyrosine-protein kinase-like otk from Drosophila mojavensis (Fruit fly).